The sequence spans 245 residues: Ribosomal RNA small subunit methyltransferase G (245 aa).

S-adenosyl-L-methionine is bound by residues Gly-79, Phe-84, 130 to 131 (AE), and Arg-150.

Belongs to the methyltransferase superfamily. RNA methyltransferase RsmG family.

The protein resides in the cytoplasm. Functionally, specifically methylates the N7 position of a guanine in 16S rRNA. This is Ribosomal RNA small subunit methyltransferase G from Limosilactobacillus fermentum (strain NBRC 3956 / LMG 18251) (Lactobacillus fermentum).